A 345-amino-acid chain; its full sequence is Protein-glutamate methylesterase/protein-glutamine glutaminase 2 (345 aa).

Residues Lys7–Leu124 enclose the Response regulatory domain. Asp58 is subject to 4-aspartylphosphate. The 192-residue stretch at Ser154 to Ser345 folds into the CheB-type methylesterase domain. Catalysis depends on residues Ser166, His192, and Asp289.

Belongs to the CheB family. In terms of processing, phosphorylated by CheA. Phosphorylation of the N-terminal regulatory domain activates the methylesterase activity.

It is found in the cytoplasm. The enzyme catalyses [protein]-L-glutamate 5-O-methyl ester + H2O = L-glutamyl-[protein] + methanol + H(+). The catalysed reaction is L-glutaminyl-[protein] + H2O = L-glutamyl-[protein] + NH4(+). Its function is as follows. Involved in chemotaxis. Part of a chemotaxis signal transduction system that modulates chemotaxis in response to various stimuli. Catalyzes the demethylation of specific methylglutamate residues introduced into the chemoreceptors (methyl-accepting chemotaxis proteins or MCP) by CheR. Also mediates the irreversible deamidation of specific glutamine residues to glutamic acid. The chain is Protein-glutamate methylesterase/protein-glutamine glutaminase 2 from Vibrio vulnificus (strain YJ016).